A 360-amino-acid chain; its full sequence is Phospho-N-acetylmuramoyl-pentapeptide-transferase (360 aa).

The Periplasmic portion of the chain corresponds to 1 to 25 (MLVWLAEHLVKYYSGFNVFSYLTFR). A helical membrane pass occupies residues 26-46 (AIVSLLTALFISLWMGPRMIA). Over 47-71 (HLQKLSFGQVVRNDGPESHFSKRGT) the chain is Cytoplasmic. The chain crosses the membrane as a helical span at residues 72 to 92 (PTMGGIMILTAIVISVLLWAY). Residue Pro93 is a topological domain, periplasmic. Residues 94-114 (SNPYVWCVLVVLVGYGVIGFV) traverse the membrane as a helical segment. The Cytoplasmic segment spans residues 115-131 (DDYRKVVRKDTKGLIAR). The chain crosses the membrane as a helical span at residues 132-152 (WKYFWMSVIALGVAFALYLAG). At 153–167 (KDTPATQLVVPFFKD) the chain is on the periplasmic side. Residues 168 to 188 (VMPQLGLFYILLAYFVIVGTG) traverse the membrane as a helical segment. The Cytoplasmic portion of the chain corresponds to 189–198 (NAVNLTDGLD). The chain crosses the membrane as a helical span at residues 199-219 (GLAIMPTVFVAGGFALVAWAT). Over 220–235 (GNMNFASYLHIPYLRH) the chain is Periplasmic. A helical transmembrane segment spans residues 236–256 (AGELVIVCTAIVGAGLGFLWF). Residues 257 to 262 (NTYPAQ) are Cytoplasmic-facing. The chain crosses the membrane as a helical span at residues 263–283 (VFMGDVGSLALGGALGIIAVL). At 284–287 (LRQE) the chain is on the periplasmic side. A helical transmembrane segment spans residues 288 to 308 (FLLVIMGGVFVVETLSVILQV). Residues 309 to 337 (GSFKLRGQRIFRMAPIHHHYELKGWPEPR) lie on the Cytoplasmic side of the membrane. A helical transmembrane segment spans residues 338–358 (VIVRFWIISLMLVLIGLATLK). At 359–360 (VR) the chain is on the periplasmic side.

This sequence belongs to the glycosyltransferase 4 family. MraY subfamily. It depends on Mg(2+) as a cofactor.

The protein localises to the cell inner membrane. The enzyme catalyses UDP-N-acetyl-alpha-D-muramoyl-L-alanyl-gamma-D-glutamyl-meso-2,6-diaminopimeloyl-D-alanyl-D-alanine + di-trans,octa-cis-undecaprenyl phosphate = di-trans,octa-cis-undecaprenyl diphospho-N-acetyl-alpha-D-muramoyl-L-alanyl-D-glutamyl-meso-2,6-diaminopimeloyl-D-alanyl-D-alanine + UMP. It functions in the pathway cell wall biogenesis; peptidoglycan biosynthesis. Its function is as follows. Catalyzes the initial step of the lipid cycle reactions in the biosynthesis of the cell wall peptidoglycan: transfers peptidoglycan precursor phospho-MurNAc-pentapeptide from UDP-MurNAc-pentapeptide onto the lipid carrier undecaprenyl phosphate, yielding undecaprenyl-pyrophosphoryl-MurNAc-pentapeptide, known as lipid I. The protein is Phospho-N-acetylmuramoyl-pentapeptide-transferase of Shigella boydii serotype 18 (strain CDC 3083-94 / BS512).